Here is a 244-residue protein sequence, read N- to C-terminus: Putative ribosomal recycling factor, mitochondrial (244 aa).

It belongs to the RRF family.

Its subcellular location is the mitochondrion. Functionally, necessary for protein synthesis in mitochondria. Functions as a ribosome recycling factor in mitochondria. This is Putative ribosomal recycling factor, mitochondrial (rrf1) from Schizosaccharomyces pombe (strain 972 / ATCC 24843) (Fission yeast).